The sequence spans 196 residues: ATP-dependent Clp protease proteolytic subunit (196 aa).

Ser-101 (nucleophile) is an active-site residue. Residue His-126 is part of the active site.

It belongs to the peptidase S14 family. Component of the chloroplastic Clp protease core complex.

Its subcellular location is the plastid. It is found in the chloroplast stroma. It carries out the reaction Hydrolysis of proteins to small peptides in the presence of ATP and magnesium. alpha-casein is the usual test substrate. In the absence of ATP, only oligopeptides shorter than five residues are hydrolyzed (such as succinyl-Leu-Tyr-|-NHMec, and Leu-Tyr-Leu-|-Tyr-Trp, in which cleavage of the -Tyr-|-Leu- and -Tyr-|-Trp bonds also occurs).. Cleaves peptides in various proteins in a process that requires ATP hydrolysis. Has a chymotrypsin-like activity. Plays a major role in the degradation of misfolded proteins. In Atropa belladonna (Belladonna), this protein is ATP-dependent Clp protease proteolytic subunit.